Here is a 565-residue protein sequence, read N- to C-terminus: Sulfite reductase [NADPH] hemoprotein beta-component (565 aa).

[4Fe-4S] cluster-binding residues include Cys-429, Cys-435, Cys-474, and Cys-478. Residue Cys-478 participates in siroheme binding.

Belongs to the nitrite and sulfite reductase 4Fe-4S domain family. In terms of assembly, alpha(8)-beta(8). The alpha component is a flavoprotein, the beta component is a hemoprotein. Siroheme serves as cofactor. It depends on [4Fe-4S] cluster as a cofactor.

It carries out the reaction hydrogen sulfide + 3 NADP(+) + 3 H2O = sulfite + 3 NADPH + 4 H(+). It functions in the pathway sulfur metabolism; hydrogen sulfide biosynthesis; hydrogen sulfide from sulfite (NADPH route): step 1/1. In terms of biological role, component of the sulfite reductase complex that catalyzes the 6-electron reduction of sulfite to sulfide. This is one of several activities required for the biosynthesis of L-cysteine from sulfate. In Shewanella baltica (strain OS223), this protein is Sulfite reductase [NADPH] hemoprotein beta-component.